The sequence spans 172 residues: Signal peptidase complex catalytic subunit SEC11 (172 aa).

Over 1–14 (MLSSLGNPRQAAAQ) the chain is Cytoplasmic. Residues 15 to 35 (LMNFALILSTAFMMWKGLSVI) traverse the membrane as a helical; Signal-anchor for type II membrane protein segment. Residues 36–172 (TDSPSPIVVV…MGLLVVLQRE (137 aa)) lie on the Lumenal side of the membrane. Residues S49 and H90 each act as charge relay system in the active site. N111 carries an N-linked (GlcNAc...) asparagine glycan. D115 serves as the catalytic Charge relay system. The segment at 158 to 169 (VMLGIMGLLVVL) is C-terminal short (CTS) helix.

The protein belongs to the peptidase S26B family. As to quaternary structure, component of the signal peptidase complex (SPC) composed of a catalytic subunit SEC11 and three accessory subunits SPC1, SPC2 and SPC3. The complex induces a local thinning of the ER membrane which is used to measure the length of the signal peptide (SP) h-region of protein substrates. This ensures the selectivity of the complex towards h-regions shorter than 18-20 amino acids. SPC associates with the translocon complex.

The protein localises to the endoplasmic reticulum membrane. It carries out the reaction Cleavage of hydrophobic, N-terminal signal or leader sequences from secreted and periplasmic proteins.. Catalytic component of the signal peptidase complex (SPC) which catalyzes the cleavage of N-terminal signal sequences from nascent proteins as they are translocated into the lumen of the endoplasmic reticulum. Specifically cleaves N-terminal signal peptides that contain a hydrophobic alpha-helix (h-region) shorter than 18-20 amino acids. In Fusarium vanettenii (strain ATCC MYA-4622 / CBS 123669 / FGSC 9596 / NRRL 45880 / 77-13-4) (Fusarium solani subsp. pisi), this protein is Signal peptidase complex catalytic subunit SEC11 (SEC11).